A 190-amino-acid chain; its full sequence is Secreted isochorismatase effector Isc1 (190 aa).

Active-site residues include D26, K100, and C133.

It belongs to the isochorismatase family.

It localises to the secreted. The protein localises to the host cytoplasm. Its subcellular location is the host nucleus. It carries out the reaction isochorismate + H2O = (2S,3S)-2,3-dihydroxy-2,3-dihydrobenzoate + pyruvate. In terms of biological role, secreted isochorismatase required for full virulence of V.dahliae. Suppresses salicylate-mediated innate immunity of the host by disrupting the plant salicylate metabolism pathway via hydrolysis of its isochorismate precursor. This is Secreted isochorismatase effector Isc1 from Verticillium dahliae (strain VdLs.17 / ATCC MYA-4575 / FGSC 10137) (Verticillium wilt).